The primary structure comprises 157 residues: Protein-export protein SecB (157 aa).

This sequence belongs to the SecB family. Homotetramer, a dimer of dimers. One homotetramer interacts with 1 SecA dimer.

Its subcellular location is the cytoplasm. In terms of biological role, one of the proteins required for the normal export of preproteins out of the cell cytoplasm. It is a molecular chaperone that binds to a subset of precursor proteins, maintaining them in a translocation-competent state. It also specifically binds to its receptor SecA. The polypeptide is Protein-export protein SecB (Rhodopseudomonas palustris (strain TIE-1)).